A 308-amino-acid polypeptide reads, in one-letter code: Acetylglutamate kinase (308 aa).

Substrate contacts are provided by residues 64-65 (GG), Arg86, and Asn192.

It belongs to the acetylglutamate kinase family. ArgB subfamily.

The protein resides in the cytoplasm. It catalyses the reaction N-acetyl-L-glutamate + ATP = N-acetyl-L-glutamyl 5-phosphate + ADP. It participates in amino-acid biosynthesis; L-arginine biosynthesis; N(2)-acetyl-L-ornithine from L-glutamate: step 2/4. Catalyzes the ATP-dependent phosphorylation of N-acetyl-L-glutamate. The protein is Acetylglutamate kinase of Myxococcus xanthus (strain DK1622).